The sequence spans 335 residues: Dolichyl-diphosphooligosaccharide--protein glycosyltransferase subunit MAGT1 (335 aa).

Positions 1–29 are cleaved as a signal peptide; it reads MASPRWFWSVCAIAAVALLLVSKVPSASA. Residues 30 to 184 lie on the Extracellular side of the membrane; the sequence is QRKKEMVLSE…DVNIRVIRPP (155 aa). The Thioredoxin domain maps to 47 to 175; that stretch reads WANKRPVIRM…IARWIADRTD (129 aa). Asn71 is a glycosylation site (N-linked (GlcNAc...) asparagine). Cysteines 87 and 90 form a disulfide. The helical transmembrane segment at 185-205 threads the bilayer; the sequence is NYAGPLMLGLLLAVIGGLVYL. Over 206–209 the chain is Cytoplasmic; that stretch reads RRSN. A helical transmembrane segment spans residues 210–230; sequence MEFLFNKTGWAFAALCFVLAM. The Extracellular segment spans residues 231–270; the sequence is TSGQMWNHIRGPPYAHKNPHTGHVNYIHGSSQAQFVAETH. The helical transmembrane segment at 271–291 threads the bilayer; the sequence is IVLLFNGGVTLGMVLLCEAAT. The Cytoplasmic portion of the chain corresponds to 292 to 300; sequence SDMDIGKRR. The helical transmembrane segment at 301-321 threads the bilayer; that stretch reads MMCIAGIGLVVLFFSWMLSIF. Residues 322 to 335 are Extracellular-facing; the sequence is RSKYHGYPYSFLMS.

Belongs to the OST3/OST6 family. Accessory component of the STT3B-containing form of the oligosaccharyltransferase (OST) complex. OST exists in two different complex forms which contain common core subunits RPN1, RPN2, OST48, OST4, DAD1 and TMEM258, either STT3A or STT3B as catalytic subunits, and form-specific accessory subunits. OST can form stable complexes with the Sec61 complex or with both the Sec61 and TRAP complexes. The association of TUSC3 or MAGT1 with the STT3B-containing complex seems to be mutually exclusvice. Expressed at high levels in kidney, colon, heart and liver. Expressed at lower levels in intestine, spleen, brain and lung.

The protein resides in the cell membrane. It localises to the endoplasmic reticulum. It is found in the endoplasmic reticulum membrane. It participates in protein modification; protein glycosylation. Its function is as follows. Accessory component of the STT3B-containing form of the N-oligosaccharyl transferase (OST) complex which catalyzes the transfer of a high mannose oligosaccharide from a lipid-linked oligosaccharide donor to an asparagine residue within an Asn-X-Ser/Thr consensus motif in nascent polypeptide chains. Involved in N-glycosylation of STT3B-dependent substrates. Specifically required for the glycosylation of a subset of acceptor sites that are near cysteine residues; in this function seems to act redundantly with TUSC3. In its oxidized form proposed to form transient mixed disulfides with a glycoprotein substrate to facilitate access of STT3B to the unmodified acceptor site. Also has oxidoreductase-independent functions in the STT3B-containing OST complex possibly involving substrate recognition. Could indirectly play a role in Mg(2+) transport in epithelial cells. The polypeptide is Dolichyl-diphosphooligosaccharide--protein glycosyltransferase subunit MAGT1 (Mus musculus (Mouse)).